A 547-amino-acid chain; its full sequence is Chaperonin GroEL (547 aa).

ATP is bound by residues 29 to 32 (TLGP), 86 to 90 (DGTTT), Gly413, 478 to 480 (DVL), and Asp494.

It belongs to the chaperonin (HSP60) family. Forms a cylinder of 14 subunits composed of two heptameric rings stacked back-to-back. Interacts with the co-chaperonin GroES.

Its subcellular location is the cytoplasm. The enzyme catalyses ATP + H2O + a folded polypeptide = ADP + phosphate + an unfolded polypeptide.. Together with its co-chaperonin GroES, plays an essential role in assisting protein folding. The GroEL-GroES system forms a nano-cage that allows encapsulation of the non-native substrate proteins and provides a physical environment optimized to promote and accelerate protein folding. The protein is Chaperonin GroEL of Alkaliphilus metalliredigens (strain QYMF).